A 458-amino-acid polypeptide reads, in one-letter code: Vasoactive intestinal polypeptide receptor 1 (458 aa).

The signal sequence occupies residues 1-31 (MRPLSPPPAGWFCVLAGVLACVLGPVGSWAV). Residues 32–142 (GLQQEECDYL…DEQQTVFYNS (111 aa)) are Extracellular-facing. Intrachain disulfides connect Cys-38–Cys-209, Cys-51–Cys-73, Cys-64–Cys-106, Cys-87–Cys-123, and Cys-216–Cys-286. 4 N-linked (GlcNAc...) asparagine glycosylation sites follow: Asn-59, Asn-70, Asn-101, and Asn-105. Residues 143-167 (VKTGYTIGYSLSLAALLVATAILSL) traverse the membrane as a helical segment. The Cytoplasmic segment spans residues 168 to 175 (FRKLHCTR). The helical transmembrane segment at 176-197 (NYIHMHLFISFILRATAVFIKD) threads the bilayer. Topologically, residues 198–217 (LALFDSEESDHCSKGSVGCK) are extracellular. The helical transmembrane segment at 218-242 (AAVVLFQYCVMANFFWLLVEGLYLH) threads the bilayer. Topologically, residues 243-255 (TLLAVSFFSERKY) are cytoplasmic. Residues 256–277 (FWGYIFVGWGVPSTFIMVWTVV) form a helical membrane-spanning segment. Residues 278-292 (RIHFEDYGCWDTIHS) lie on the Extracellular side of the membrane. The chain crosses the membrane as a helical span at residues 293–317 (SLWWIIKAPILASILVNFILFIRII). The Cytoplasmic portion of the chain corresponds to 318-339 (GILVQKLRPPDVGKSDNSPYSR). Residues 340-360 (LAKSTLLLIPLFGVHYIMFAF) traverse the membrane as a helical segment. At 361 to 368 (FPDNFKAE) the chain is on the extracellular side. Residues 369 to 392 (VKMVFELIVGSFQGCVVAILYCFL) form a helical membrane-spanning segment. Topologically, residues 393–458 (NGEVQAELRR…SSFQAEVSLV (66 aa)) are cytoplasmic.

The protein belongs to the G-protein coupled receptor 2 family. Interacts with ADCYAP1/PACAP; activated by both PACAP27 and PACAP38 neuropeptides. Interacts with VIP; the interaction results in VIPR1 activation.

Its subcellular location is the cell membrane. In terms of biological role, g protein-coupled receptor activated by the neuropeptides vasoactive intestinal peptide (VIP) and pituitary adenylate cyclase-activating polypeptide (ADCYAP1/PACAP). Binds VIP and both PACAP27 and PACAP38 bioactive peptides with the following order of ligand affinity VIP = PACAP27 &gt; PACAP38. Ligand binding causes a conformation change that triggers signaling via guanine nucleotide-binding proteins (G proteins) and modulates the activity of downstream effectors. Activates cAMP-dependent pathway. This chain is Vasoactive intestinal polypeptide receptor 1 (VIPR1), found in Sus scrofa (Pig).